The primary structure comprises 208 residues: Uracil phosphoribosyltransferase (208 aa).

5-phospho-alpha-D-ribose 1-diphosphate is bound by residues Arg-78, Arg-103, and 130–138 (DPMLATGGT). Residues Ile-193 and 198–200 (GDA) contribute to the uracil site. Asp-199 contacts 5-phospho-alpha-D-ribose 1-diphosphate.

Belongs to the UPRTase family. Requires Mg(2+) as cofactor.

The enzyme catalyses UMP + diphosphate = 5-phospho-alpha-D-ribose 1-diphosphate + uracil. It functions in the pathway pyrimidine metabolism; UMP biosynthesis via salvage pathway; UMP from uracil: step 1/1. Allosterically activated by GTP. Catalyzes the conversion of uracil and 5-phospho-alpha-D-ribose 1-diphosphate (PRPP) to UMP and diphosphate. This chain is Uracil phosphoribosyltransferase, found in Maridesulfovibrio salexigens (strain ATCC 14822 / DSM 2638 / NCIMB 8403 / VKM B-1763) (Desulfovibrio salexigens).